The sequence spans 1075 residues: Protein nervous wreck (1075 aa).

In terms of domain architecture, F-BAR spans 11 to 289 (VKFLKNLHTE…QAQQLTREYN (279 aa)). Disordered regions lie at residues 361 to 381 (LRDS…LDTK) and 431 to 536 (SASS…DEPI). A compositionally biased stretch (polar residues) spans 431-453 (SASSISMRTDASGQGENPSSDSF). The span at 469–482 (PKQEQQLSRDRTFS) shows a compositional bias: basic and acidic residues. A compositionally biased stretch (low complexity) spans 493–512 (SAAAASSAAAASSSMMASSA). SH3 domains follow at residues 542–603 (EAIF…IDQE) and 658–721 (SDVE…ECDE). Disordered stretches follow at residues 722-747 (MGEP…LPPA), 769-837 (SQDT…EKGA), and 864-917 (GADK…EGNA). 2 stretches are compositionally biased toward pro residues: residues 733-747 (SPPP…LPPA) and 809-818 (QPPPSLPPPQ). Positions 819–837 (LAKAGGSAPGSGSKVEKGA) are enriched in low complexity. Basic and acidic residues predominate over residues 883 to 897 (VSKEQPAEVAKKPDI).

As to quaternary structure, homodimer. Interacts (via SH3 domain 1) with WASp. Interacts (via SH3 domain 1) with shi/dynamin. Interacts (via SH3 domain 2) with Dap160. Interacts (via F-BAR domain) with SH3PX1. Interacts (via SH3 domain 2) with Snx16. Identified in a complex with Syn and Syt1. In terms of tissue distribution, detected in larval body wall muscle. Detected at the neuromuscular junction, on motoneuron axons and axon terminals, at synaptic boutons in the periactive zone surrounding the synapse (at protein level). Detected on motoneuron axons and axon terminals, at synaptic boutons in the periactive zone surrounding the synapse.

It localises to the endomembrane system. The protein localises to the synapse. Its subcellular location is the cell projection. It is found in the axon. The protein resides in the presynaptic cell membrane. It localises to the cytoplasmic vesicle. The protein localises to the secretory vesicle. Its subcellular location is the synaptic vesicle. It is found in the recycling endosome. In terms of biological role, adapter protein that provides a link between vesicular membrane traffic and the actin assembly machinery. Acts together with Cdc42 to stimulate actin nucleation mediated by WASp and the ARP2/3 complex. Binds to membranes enriched in phosphatidylinositol 4,5-bisphosphate and causes local membrane deformation. Required for normal structure and function of synapses at the neuromuscular junction. Plays a role in synaptic vesicle trafficking. Required for the release of a normal number of synaptic vesicles per action potential. The protein is Protein nervous wreck of Drosophila melanogaster (Fruit fly).